The primary structure comprises 339 residues: DNA repair protein RAD51 homolog 1 (339 aa).

The segment at 1-23 (MAMQVQFEASTDTSAEEESFGPE) is disordered. A HhH domain is found at 48–77 (TVESVAHAPKKELLNIKGISEAKADKILAE). 127 to 134 (GEFRTGKT) contacts ATP.

Belongs to the RecA family. RAD51 subfamily. Forms linear homooligomers, giving rise to a RAD51 nucleoprotein filament, which is essential for strand-pairing reactions during DNA recombination. In terms of tissue distribution, expressed at high levels in lymphoid and reproductive organs.

Its subcellular location is the nucleus. The protein resides in the cytoplasm. The protein localises to the chromosome. Functionally, plays an important role in homologous strand exchange, a key step in DNA repair through homologous recombination (HR). Binds to single-stranded DNA in an ATP-dependent manner to form nucleoprotein filaments which are essential for the homology search and strand exchange. Catalyzes the recognition of homology and strand exchange between homologous DNA partners to form a joint molecule between a processed DNA break and the repair template. Recruited to resolve stalled replication forks during replication stress. Also involved in interstrand cross-link repair. The protein is DNA repair protein RAD51 homolog 1 (RAD51A) of Gallus gallus (Chicken).